Consider the following 379-residue polypeptide: Lipid-A-disaccharide synthase (379 aa).

This sequence belongs to the LpxB family.

It catalyses the reaction a lipid X + a UDP-2-N,3-O-bis[(3R)-3-hydroxyacyl]-alpha-D-glucosamine = a lipid A disaccharide + UDP + H(+). It functions in the pathway bacterial outer membrane biogenesis; LPS lipid A biosynthesis. Condensation of UDP-2,3-diacylglucosamine and 2,3-diacylglucosamine-1-phosphate to form lipid A disaccharide, a precursor of lipid A, a phosphorylated glycolipid that anchors the lipopolysaccharide to the outer membrane of the cell. The chain is Lipid-A-disaccharide synthase from Aeromonas hydrophila subsp. hydrophila (strain ATCC 7966 / DSM 30187 / BCRC 13018 / CCUG 14551 / JCM 1027 / KCTC 2358 / NCIMB 9240 / NCTC 8049).